We begin with the raw amino-acid sequence, 969 residues long: NKSRKRRNRVSFLGAATVEPPKPIPLTWKTEKPVWVNQWPLPKQKLEALHLLANEQLEKGHIEPSFSPWNSPVFVIQKKSGKWRMLTDLRAVNAVIQPMGPLQPGLPSPAMIPKDWPLIIIDLKDCFFTIPLAEQDCEKFAFTIPAINNKEPATRFQWKVLPQGMLNSPTICQTFVGRALQPVREKFSDCYIIHYIDDILCAAETKDKLIDCYTFLQAEVANAGLAIASDKIQTSTPFHYLGMQIENRKIKPQKIEIRKDTLKTLNDFQKLLGDINWIRPTLGIPTYAMSNLFSILRGDSDLNSKRILTPEATKEIKLVEEKIQSAQINRIDPLAPLQLLIFATAHSPTGIIIQNTDLVEWSFLPHSTVKTFTLYLDQIATLIGQTRLRIIKLCGNDPDKIVVPLTKEQVRQAFINSGAWQIGLANFVGIIDNHYPKTKIFQFLKMTTWILPKITRREPLENALTVFTDGSSNGKAAYTGPKERVIKTPYQSAQRAELVAVITVLQDFDQPINIISDSAYVVQATRDVETALIKYSMDDQLNQLFNLLQQTVRKRNFPFYITHIRAHTNLPGPLTKANEEADLLVSSALIKAQELHALTHVNAAGLKNKFDVTWKQAKDIVQHCTQCQVLHLPTQEAGVNPRGLCPNALWQMDVTHVPSFGRLSYVHVTVDTYSHFIWATCQTGESTSHVKKHLLSCFAVMGVPEKIKTDNGPGYCSKAFQKFLSQWKISHTTGIPYNSQGQAIVERTNRTLKTQLVKQKEGGDSKECTTPQMQLNLALYTLNFLNIYRNQTTTSAEQHLTGKKNSPHEGKLIWWKDNKNKTWEIGKVITWGRGFACVSPGENQLPVWIPTRHLKFYNEPIGDAKKRASTEMVTPVTWMDNPIEVYVNDSVWVPGPTDDRCPAKPEEEGMMINISIGYRYPPICLGRAPGCLMPTVQNWLVEVPIVSPICRFTYHMVSGMSLRPRVNYL.

Positions 57–245 constitute a Reverse transcriptase domain; that stretch reads LEKGHIEPSF…TPFHYLGMQI (189 aa). An LPQG motif is present at residues 161–164; sequence LPQG. In terms of domain architecture, RNase H type-1 spans 460–590; it reads LENALTVFTD…ADLLVSSALI (131 aa). The Mg(2+) site is built by Asp469, Glu497, Asp517, and Asp582. Residues 587-628 form an Integrase-type zinc finger; that stretch reads SALIKAQELHALTHVNAAGLKNKFDVTWKQAKDIVQHCTQCQ. Residues His596, His600, Cys624, and Cys627 each coordinate Zn(2+). The 162-residue stretch at 642 to 803 folds into the Integrase catalytic domain; that stretch reads RGLCPNALWQ…TSAEQHLTGK (162 aa). The integrase-type DNA-binding region spans 811–859; that stretch reads KLIWWKDNKNKTWEIGKVITWGRGFACVSPGENQLPVWIPTRHLKFYNE.

This sequence belongs to the beta type-B retroviral polymerase family. HERV class-II K(HML-2) pol subfamily.

The enzyme catalyses DNA(n) + a 2'-deoxyribonucleoside 5'-triphosphate = DNA(n+1) + diphosphate. It catalyses the reaction Endonucleolytic cleavage to 5'-phosphomonoester.. Early post-infection, the reverse transcriptase converts the viral RNA genome into double-stranded viral DNA. The RNase H domain of the reverse transcriptase performs two functions. It degrades the RNA template and specifically removes the RNA primer from the RNA/DNA hybrid. Following nuclear import, the integrase catalyzes the insertion of the linear, double-stranded viral DNA into the host cell chromosome. Endogenous Pol proteins may have kept, lost or modified their original function during evolution. In Homo sapiens (Human), this protein is Endogenous retrovirus group K member 11 Pol protein (ERVK-11).